The following is a 403-amino-acid chain: JmjC domain-containing histone demethylation protein 1 (403 aa).

The region spanning 141–328 (WSLREWCNYF…QQLKIVDVEK (188 aa)) is the JmjC domain. Threonine 221 is a substrate binding site. Histidine 224 and aspartate 226 together coordinate Fe cation. Lysine 241 serves as a coordination point for substrate. Position 296 (histidine 296) interacts with Fe cation.

The protein belongs to the JHDM1 histone demethylase family. The cofactor is Fe(2+).

The protein localises to the nucleus. It carries out the reaction N(6),N(6)-dimethyl-L-lysyl(36)-[histone H3] + 2 2-oxoglutarate + 2 O2 = L-lysyl(36)-[histone H3] + 2 formaldehyde + 2 succinate + 2 CO2. In terms of biological role, histone demethylase that specifically demethylates 'Lys-36' of histone H3, thereby playing a central role in histone code. The protein is JmjC domain-containing histone demethylation protein 1 (JHD1) of Candida glabrata (strain ATCC 2001 / BCRC 20586 / JCM 3761 / NBRC 0622 / NRRL Y-65 / CBS 138) (Yeast).